Here is a 379-residue protein sequence, read N- to C-terminus: Cytochrome b (379 aa).

The next 4 helical transmembrane spans lie at 33–53 (FGSL…FLAM), 77–98 (WLIR…FIHV), 113–133 (WNIG…GYVL), and 178–198 (FFAF…VHLL). Positions 83 and 97 each coordinate heme b. Positions 182 and 196 each coordinate heme b. His-201 is an a ubiquinone binding site. 4 helical membrane-spanning segments follow: residues 226 to 246 (IKDL…ALFF), 288 to 308 (LGGV…PLLN), 320 to 340 (ITQI…WIGG), and 347 to 367 (FTMI…ILMP).

This sequence belongs to the cytochrome b family. As to quaternary structure, the cytochrome bc1 complex contains 11 subunits: 3 respiratory subunits (MT-CYB, CYC1 and UQCRFS1), 2 core proteins (UQCRC1 and UQCRC2) and 6 low-molecular weight proteins (UQCRH/QCR6, UQCRB/QCR7, UQCRQ/QCR8, UQCR10/QCR9, UQCR11/QCR10 and a cleavage product of UQCRFS1). This cytochrome bc1 complex then forms a dimer. Heme b serves as cofactor.

It is found in the mitochondrion inner membrane. Functionally, component of the ubiquinol-cytochrome c reductase complex (complex III or cytochrome b-c1 complex) that is part of the mitochondrial respiratory chain. The b-c1 complex mediates electron transfer from ubiquinol to cytochrome c. Contributes to the generation of a proton gradient across the mitochondrial membrane that is then used for ATP synthesis. This Akodon dayi (Day's grass mouse) protein is Cytochrome b (MT-CYB).